Reading from the N-terminus, the 433-residue chain is 3-deoxy-D-manno-octulosonic acid transferase (433 aa).

The helical; Signal-anchor transmembrane segment at 11-31 (TFLYDCFLIFAFMVGLPRILY) threads the bilayer. Glu-70 acts as the Proton acceptor in catalysis. Residues 277-278 (PR), 317-319 (IGW), and 344-347 (NLLE) contribute to the CMP site.

It belongs to the glycosyltransferase group 1 family. Glycosyltransferase 30 subfamily.

The protein localises to the cell inner membrane. It catalyses the reaction lipid IVA (E. coli) + CMP-3-deoxy-beta-D-manno-octulosonate = alpha-Kdo-(2-&gt;6)-lipid IVA (E. coli) + CMP + H(+). It carries out the reaction alpha-Kdo-(2-&gt;6)-lipid IVA (E. coli) + CMP-3-deoxy-beta-D-manno-octulosonate = alpha-Kdo-(2-&gt;4)-alpha-Kdo-(2-&gt;6)-lipid IVA (E. coli) + CMP + H(+). The enzyme catalyses alpha-Kdo-(2-&gt;4)-alpha-Kdo-(2-&gt;6)-lipid IVA (E. coli) + CMP-3-deoxy-beta-D-manno-octulosonate = alpha-Kdo-(2-&gt;8)-alpha-Kdo-(2-&gt;4)-alpha-Kdo-(2-&gt;6)-lipid IVA (E. coli) + CMP + H(+). The catalysed reaction is alpha-Kdo-(2-&gt;8)-alpha-Kdo-(2-&gt;4)-alpha-Kdo-(2-&gt;6)-lipid IVA (E. coli) + CMP-3-deoxy-beta-D-manno-octulosonate = alpha-Kdo-(2-&gt;8)-[alpha-Kdo-(2-&gt;4)]-alpha-Kdo-(2-&gt;4)-alpha-Kdo-(2-&gt;6)-lipid IVA + CMP + H(+). The protein operates within bacterial outer membrane biogenesis; LPS core biosynthesis. In terms of biological role, involved in lipopolysaccharide (LPS) biosynthesis. Catalyzes the transfer of predominantly four 3-deoxy-D-manno-octulosonate (Kdo) residues from CMP-Kdo to lipid IV(A), the tetraacyldisaccharide-1,4'-bisphosphate precursor of lipid A. Thus generates the genus-specific LPS epitope of Chlamydia, composed of the trisaccharide alpha-Kdo-(2-&gt;8)-alpha-Kdo-(2-&gt;4)-alpha-Kdo. The chain is 3-deoxy-D-manno-octulosonic acid transferase (waaA) from Chlamydophila psittaci (strain ATCC VR-125 / 6BC) (Chlamydia psittaci).